The following is a 216-amino-acid chain: Ceramide-1-phosphate transfer protein (216 aa).

Residues aspartate 56, lysine 60, arginine 108, arginine 112, and histidine 152 each contribute to the an N-acylsphingoid base 1-phosphate site.

Belongs to the GLTP family.

It is found in the cytoplasm. Its subcellular location is the cytosol. The protein localises to the golgi apparatus. The protein resides in the trans-Golgi network membrane. It localises to the cell membrane. It is found in the endosome membrane. Its subcellular location is the nucleus outer membrane. The catalysed reaction is N-(hexadecanoyl)-sphing-4-enine-1-phosphate(in) = N-(hexadecanoyl)-sphing-4-enine-1-phosphate(out). It carries out the reaction N-(9Z-octadecenoyl)-sphing-4-enine-1-phosphate(in) = N-(9Z-octadecenoyl)-sphing-4-enine-1-phosphate(out). Its function is as follows. Mediates the intracellular transfer of ceramide-1-phosphate (C1P) between organelle membranes and the cell membrane. Required for normal structure of the Golgi stacks. Can bind phosphoceramides with a variety of aliphatic chains, but has a preference for lipids with saturated C16:0 or monounsaturated C18:1 aliphatic chains, and is inefficient with phosphoceramides containing lignoceryl (C24:0). Plays a role in the regulation of the cellular levels of ceramide-1-phosphate, and thereby contributes to the regulation of phospholipase PLA2G4A activity and the release of arachidonic acid. Has no activity with galactosylceramide, lactosylceramide, sphingomyelin, phosphatidylcholine, phosphatidic acid and ceramide. C1P transfer is stimulated by phosphatidylserine in C1P source vesicles. Regulates autophagy, inflammasome mediated IL1B and IL18 processing, and pyroptosis, but not apoptosis. This chain is Ceramide-1-phosphate transfer protein, found in Mus musculus (Mouse).